Here is a 393-residue protein sequence, read N- to C-terminus: Putative competence-damage inducible protein (393 aa).

Belongs to the CinA family.

The chain is Putative competence-damage inducible protein from Streptococcus suis (strain 05ZYH33).